The chain runs to 357 residues: DNA replication and repair protein RecF (357 aa).

An ATP-binding site is contributed by 30-37; it reads GANGSGKT.

It belongs to the RecF family.

It localises to the cytoplasm. The RecF protein is involved in DNA metabolism; it is required for DNA replication and normal SOS inducibility. RecF binds preferentially to single-stranded, linear DNA. It also seems to bind ATP. The protein is DNA replication and repair protein RecF of Shigella dysenteriae serotype 1 (strain Sd197).